The chain runs to 117 residues: Large ribosomal subunit protein bL19 (117 aa).

The protein belongs to the bacterial ribosomal protein bL19 family.

Its function is as follows. This protein is located at the 30S-50S ribosomal subunit interface and may play a role in the structure and function of the aminoacyl-tRNA binding site. The polypeptide is Large ribosomal subunit protein bL19 (Paenarthrobacter aurescens (strain TC1)).